The sequence spans 62 residues: UPF0434 protein NGR_c31900 (62 aa).

It belongs to the UPF0434 family.

The protein is UPF0434 protein NGR_c31900 of Sinorhizobium fredii (strain NBRC 101917 / NGR234).